The following is a 544-amino-acid chain: Chaperonin GroEL 3 (544 aa).

ATP is bound by residues 30 to 33 (TLGP), lysine 51, 87 to 91 (DGTTT), glycine 415, and aspartate 496.

It belongs to the chaperonin (HSP60) family. Forms a cylinder of 14 subunits composed of two heptameric rings stacked back-to-back. Interacts with the co-chaperonin GroES.

The protein resides in the cytoplasm. The enzyme catalyses ATP + H2O + a folded polypeptide = ADP + phosphate + an unfolded polypeptide.. Functionally, together with its co-chaperonin GroES, plays an essential role in assisting protein folding. The GroEL-GroES system forms a nano-cage that allows encapsulation of the non-native substrate proteins and provides a physical environment optimized to promote and accelerate protein folding. This is Chaperonin GroEL 3 from Rhizobium meliloti (strain 1021) (Ensifer meliloti).